The chain runs to 274 residues: tRNA-cytidine(32) 2-sulfurtransferase (274 aa).

The short motif at 40–45 (SGGKDS) is the PP-loop motif element. [4Fe-4S] cluster is bound by residues Cys115, Cys118, and Cys206.

It belongs to the TtcA family. Homodimer. Mg(2+) is required as a cofactor. The cofactor is [4Fe-4S] cluster.

It is found in the cytoplasm. The catalysed reaction is cytidine(32) in tRNA + S-sulfanyl-L-cysteinyl-[cysteine desulfurase] + AH2 + ATP = 2-thiocytidine(32) in tRNA + L-cysteinyl-[cysteine desulfurase] + A + AMP + diphosphate + H(+). The protein operates within tRNA modification. In terms of biological role, catalyzes the ATP-dependent 2-thiolation of cytidine in position 32 of tRNA, to form 2-thiocytidine (s(2)C32). The sulfur atoms are provided by the cysteine/cysteine desulfurase (IscS) system. This chain is tRNA-cytidine(32) 2-sulfurtransferase, found in Pseudomonas putida (strain W619).